A 97-amino-acid polypeptide reads, in one-letter code: Co-chaperonin GroES (97 aa).

It belongs to the GroES chaperonin family. In terms of assembly, heptamer of 7 subunits arranged in a ring. Interacts with the chaperonin GroEL.

The protein resides in the cytoplasm. Functionally, together with the chaperonin GroEL, plays an essential role in assisting protein folding. The GroEL-GroES system forms a nano-cage that allows encapsulation of the non-native substrate proteins and provides a physical environment optimized to promote and accelerate protein folding. GroES binds to the apical surface of the GroEL ring, thereby capping the opening of the GroEL channel. The polypeptide is Co-chaperonin GroES (Pseudomonas fluorescens (strain ATCC BAA-477 / NRRL B-23932 / Pf-5)).